We begin with the raw amino-acid sequence, 153 residues long: Cornifin-B (153 aa).

2 disordered regions span residues 1 to 35 (MSSH…PCVS) and 49 to 85 (CHPK…HPKA). Repeat copies occupy residues 27–34 (PPPPEPCV), 35–42 (SQVKTPCD), 43–50 (TKVPEPCH), 51–58 (PKAPEPCH), 59–66 (PKAPEPCH), 67–74 (PKAPEPCH), 75–82 (PKAPEPCH), 83–90 (PKAPEPCH), 91–98 (PKAPEPCH), 99–106 (PKAPEPCH), 107–114 (PKAPEPCH), 115–122 (PKVPEPCL), 123–130 (PKAPEPCQ), and 131–138 (PIVPEPCP). Positions 27 to 138 (PPPPEPCVSQ…CQPIVPEPCP (112 aa)) are 14 X 8 AA approximate tandem repeats.

The protein belongs to the cornifin (SPRR) family. In terms of tissue distribution, expressed in fetal periderm, hair follicles and in the thickened epidermis of the lip and footpad. Also present in the epithelia of various tissues such as the penis, vagina, forestomach, tongue and esophagus.

It is found in the cytoplasm. In terms of biological role, cross-linked envelope protein of keratinocytes. It is a keratinocyte protein that first appears in the cell cytosol, but ultimately becomes cross-linked to membrane proteins by transglutaminase. All that results in the formation of an insoluble envelope beneath the plasma membrane. The chain is Cornifin-B (Sprr1b) from Mus musculus (Mouse).